Here is a 400-residue protein sequence, read N- to C-terminus: Nicotinate phosphoribosyltransferase (400 aa).

H220 is subject to Phosphohistidine; by autocatalysis.

This sequence belongs to the NAPRTase family. Post-translationally, transiently phosphorylated on a His residue during the reaction cycle. Phosphorylation strongly increases the affinity for substrates and increases the rate of nicotinate D-ribonucleotide production. Dephosphorylation regenerates the low-affinity form of the enzyme, leading to product release.

The catalysed reaction is nicotinate + 5-phospho-alpha-D-ribose 1-diphosphate + ATP + H2O = nicotinate beta-D-ribonucleotide + ADP + phosphate + diphosphate. It functions in the pathway cofactor biosynthesis; NAD(+) biosynthesis; nicotinate D-ribonucleotide from nicotinate: step 1/1. In terms of biological role, catalyzes the synthesis of beta-nicotinate D-ribonucleotide from nicotinate and 5-phospho-D-ribose 1-phosphate at the expense of ATP. The chain is Nicotinate phosphoribosyltransferase from Escherichia coli O45:K1 (strain S88 / ExPEC).